The chain runs to 648 residues: Siderophore transporter MYCGRDRAFT_70577 (648 aa).

Composition is skewed to basic and acidic residues over residues 1–11 and 29–46; these read MRTSSESHSRS and SASK…DTSI. Positions 1-58 are disordered; sequence MRTSSESHSRSDAFNGKNDASQVTVDSDSASKDHHDHDHHHKDTSINERQSQHVHQQA. Positions 47-58 are enriched in polar residues; sequence NERQSQHVHQQA. 11 consecutive transmembrane segments (helical) span residues 79–99, 151–171, 205–225, 236–256, 303–323, 336–356, 409–429, 438–458, 468–488, 500–520, and 578–598; these read LLLY…ALDQ, VVVL…QGLA, AFWS…NGFI, WGLG…IWTL, LIGL…LNLA, IAML…EALL, TIFI…GGLI, TLMV…LDGN, LAVS…ARVG, VVIS…STIA, and GIIL…SCLM.

It belongs to the major facilitator superfamily.

Its subcellular location is the cell membrane. Its function is as follows. Siderophore transporter; part of the gene cluster 14 that mediates the biosynthesis of a ferrichrome A-like siderophors which may contribute to organismal virulence. This chain is Siderophore transporter MYCGRDRAFT_70577, found in Zymoseptoria tritici (strain CBS 115943 / IPO323) (Speckled leaf blotch fungus).